We begin with the raw amino-acid sequence, 470 residues long: Xaa-Pro aminopeptidase 2 (470 aa).

Mn(2+) contacts are provided by D287, D299, H382, E413, and E437.

Belongs to the peptidase M24B family. Homodimer. Mn(2+) is required as a cofactor.

The enzyme catalyses Release of any N-terminal amino acid, including proline, that is linked to proline, even from a dipeptide or tripeptide.. The polypeptide is Xaa-Pro aminopeptidase 2 (pepP2) (Streptomyces coelicolor (strain ATCC BAA-471 / A3(2) / M145)).